Here is a 345-residue protein sequence, read N- to C-terminus: Glycosyltransferase 1 domain-containing protein 1 (345 aa).

The signal sequence occupies residues 1 to 19 (MKILFLACLRAHTGNSTTA). 2 N-linked (GlcNAc...) asparagine glycosylation sites follow: asparagine 246 and asparagine 322.

It belongs to the glycosyltransferase group 1 family. Glycosyltransferase 4 subfamily.

The protein localises to the secreted. The polypeptide is Glycosyltransferase 1 domain-containing protein 1 (glt1d1) (Xenopus tropicalis (Western clawed frog)).